The primary structure comprises 465 residues: Argininosuccinate lyase (465 aa).

This sequence belongs to the lyase 1 family. Argininosuccinate lyase subfamily.

It localises to the cytoplasm. It catalyses the reaction 2-(N(omega)-L-arginino)succinate = fumarate + L-arginine. It participates in amino-acid biosynthesis; L-arginine biosynthesis; L-arginine from L-ornithine and carbamoyl phosphate: step 3/3. The sequence is that of Argininosuccinate lyase from Bradyrhizobium diazoefficiens (strain JCM 10833 / BCRC 13528 / IAM 13628 / NBRC 14792 / USDA 110).